The chain runs to 155 residues: MACCYNSPRRLEKSFVLDGVAVSTMAQAYSIMRPKLWSAIPPYNPQLDHHSRRYFRSRVVPPILRKTDQDHGGTGRDGWIVDYFHIFGQGQRYLNRRNWAGAGHSLQQVSGHDYYNSNPKAITTGLNGRFGYRRNTPALRQHTSVFGEVTPFPIF.

This is Sperm microtubule associated protein 1 (Spmap1) from Mus musculus (Mouse).